Consider the following 256-residue polypeptide: UPF0246 protein Sbal_1048 (256 aa).

It belongs to the UPF0246 family.

The polypeptide is UPF0246 protein Sbal_1048 (Shewanella baltica (strain OS155 / ATCC BAA-1091)).